Reading from the N-terminus, the 191-residue chain is Repressor Rok (191 aa).

A coiled-coil region spans residues 2 to 43 (FNEREALRLRLEQLNEAEVKVIREYQIERDKIYAKLRELDRN). The span at 75–96 (SYQPQSQQQSVQPQLQSISSLP) shows a compositional bias: low complexity. Residues 75–116 (SYQPQSQQQSVQPQLQSISSLPAGIPDGTTRRRRGTARPGSK) are disordered. Residues 95–191 (LPAGIPDGTT…EIESAESANE (97 aa)) form a DNA-binding region.

It is found in the cytoplasm. The protein resides in the nucleoid. In terms of biological role, repressor of comK, the master regulator of competence development. Overexpression seems to be lethal. Represses at least 20 genes that specify membrane-localized and secreted proteins, including some that encode products with antibiotic activity. Binds to many AT-rich sites in the chromosome, many of which are known or thought to derive from horizontal gene transfer; helps keep mobile element ICEBs1 quiescent in the genome. Binds to its own promoter and is thus probably autoregulatory. In Bacillus subtilis (strain 168), this protein is Repressor Rok.